A 93-amino-acid chain; its full sequence is Large ribosomal subunit protein bL27 (93 aa).

Positions 1-10 (MRFLLGLQYF) are excised as a propeptide. The disordered stretch occupies residues 14–36 (KGVGSTKNGRDSESKRLGAKKSD). Residues 21 to 36 (NGRDSESKRLGAKKSD) show a composition bias toward basic and acidic residues.

The protein belongs to the bacterial ribosomal protein bL27 family. Post-translationally, the N-terminus is cleaved by ribosomal processing cysteine protease Prp.

In Mycoplasma capricolum subsp. capricolum (strain California kid / ATCC 27343 / NCTC 10154), this protein is Large ribosomal subunit protein bL27.